We begin with the raw amino-acid sequence, 284 residues long: N-methyltransferase sirN (284 aa).

It belongs to the methyltransferase superfamily. LaeA methyltransferase family.

Its pathway is mycotoxin biosynthesis. N-methyltransferase; part of the gene cluster that mediates the biosynthesis of sirodesmin PL, an epipolythiodioxopiperazine (ETP) characterized by a disulfide bridged cyclic dipeptide and that acts as a phytotoxin which is involved in the blackleg didease of canola. SirD catalyzes the O-prenylation of L-tyrosine (L-Tyr) in the presence of dimethylallyl diphosphate (DMAPP) to yield 4-O-dimethylallyl-L-Tyr, and therefore represents probably the first pathway-specific enzyme in the biosynthesis of sirodesmin PL. 4-O-dimethylallyl-L-Tyr, then undergoes condensation with L-Ser in a reaction catalyzed by the non-ribosomal peptide synthase sirP to form the diketopiperazine (DKP) backbone. Further bishydroxylation of the DKP performed by the cytochrome P450 monooxygenase sirC leads to the production of the intermediate phomamide. This step is essential to form the reactive thiol group required for toxicity of sirodesmin PL. The next steps of sirodesmin biosynthesis are not well understood yet but some predictions could be made from intermediate compounds identification. Phomamide is converted into phomalizarine via oxidation, probably by sirT. Further oxidation, methylation (by sirM or sirN) and reduction steps convert phomalizarine to deacetyl sirodesmin. Finally, acetyltransferase sirH probably acetylates deacetyl sirodesmin to produce sirodesmin PL. The sequence is that of N-methyltransferase sirN from Leptosphaeria maculans (Blackleg fungus).